Reading from the N-terminus, the 106-residue chain is Large ribosomal subunit protein uL24 (106 aa).

The protein belongs to the universal ribosomal protein uL24 family. As to quaternary structure, part of the 50S ribosomal subunit.

Its function is as follows. One of two assembly initiator proteins, it binds directly to the 5'-end of the 23S rRNA, where it nucleates assembly of the 50S subunit. One of the proteins that surrounds the polypeptide exit tunnel on the outside of the subunit. In Polaromonas naphthalenivorans (strain CJ2), this protein is Large ribosomal subunit protein uL24.